We begin with the raw amino-acid sequence, 605 residues long: Glucose oxidase (605 aa).

Residues 1 to 16 (MKTILSSSLVVSMAAA) form the signal peptide. 2 residues coordinate FAD: leucine 51 and threonine 52. Asparagine 65 carries an N-linked (GlcNAc...) asparagine glycan. Glutamate 72 lines the FAD pocket. N-linked (GlcNAc...) asparagine glycosylation is present at asparagine 111. Serine 125, asparagine 129, glycine 130, and threonine 132 together coordinate FAD. Cysteine 186 and cysteine 228 form a disulfide bridge. Asparagine 190 carries N-linked (GlcNAc...) asparagine glycosylation. Valine 272 is an FAD binding site. 4 N-linked (GlcNAc...) asparagine glycosylation sites follow: asparagine 280, asparagine 377, asparagine 410, and asparagine 495. The Proton acceptor role is filled by histidine 538. Positions 559 and 560 each coordinate O2. FAD is bound by residues glycine 571 and methionine 583.

It belongs to the GMC oxidoreductase family. As to quaternary structure, homodimer. The cofactor is FAD.

Its subcellular location is the secreted. The protein resides in the cell wall. It is found in the cytoplasm. It localises to the extracellular space. The protein localises to the extracellular matrix. The enzyme catalyses beta-D-glucose + O2 = D-glucono-1,5-lactone + H2O2. Functionally, glucose oxidase catalyzes the oxidation of beta-D-glucose to D-glucono-delta-lactone and hydrogen peroxide in the presence of molecular oxygen. Acts as a critical factor modulating pathogenicity by controlling transcription of genes important for fungal secondary metabolism and infection such as those coding for enzymes involved in degradation of the host cell wall. In Aspergillus carbonarius (strain ITEM 5010), this protein is Glucose oxidase.